Here is a 466-residue protein sequence, read N- to C-terminus: Probable Xaa-Pro aminopeptidase pepP (466 aa).

The Mn(2+) site is built by aspartate 264, aspartate 275, glutamate 398, and glutamate 438.

It belongs to the peptidase M24B family. It depends on Mn(2+) as a cofactor.

It carries out the reaction Release of any N-terminal amino acid, including proline, that is linked to proline, even from a dipeptide or tripeptide.. Catalyzes the removal of a penultimate prolyl residue from the N-termini of peptides. This chain is Probable Xaa-Pro aminopeptidase pepP (pepP), found in Aspergillus clavatus (strain ATCC 1007 / CBS 513.65 / DSM 816 / NCTC 3887 / NRRL 1 / QM 1276 / 107).